The sequence spans 37 residues: Potassium channel toxin alpha-KTx 1.11 (37 aa).

3 disulfides stabilise this stretch: Cys7-Cys28, Cys13-Cys33, and Cys17-Cys35.

This sequence belongs to the short scorpion toxin superfamily. Potassium channel inhibitor family. Alpha-KTx 01 subfamily. As to expression, expressed by the venom gland.

Its subcellular location is the secreted. Reversibly blocks the high conductance calcium-activated potassium channels composed of only alpha subunits (KCa1.1/KCNMA1). Unreversibly blocks the high conductance calcium-activated potassium channels composed of alpha and beta1 subunits (KCNMA1 and KCNMB1). Unreversibly and weakly blocks the high conductance calcium-activated potassium channels composed of alpha and beta4 (KCNMA1 and KCNMB4). In Centruroides noxius (Mexican scorpion), this protein is Potassium channel toxin alpha-KTx 1.11.